Here is a 193-residue protein sequence, read N- to C-terminus: Potassium-transporting ATPase KdpC subunit (193 aa).

The helical transmembrane segment at 7-27 (PALVLFAALTLLTGVAYPLAV) threads the bilayer.

It belongs to the KdpC family. In terms of assembly, the system is composed of three essential subunits: KdpA, KdpB and KdpC.

It is found in the cell inner membrane. Part of the high-affinity ATP-driven potassium transport (or Kdp) system, which catalyzes the hydrolysis of ATP coupled with the electrogenic transport of potassium into the cytoplasm. This subunit acts as a catalytic chaperone that increases the ATP-binding affinity of the ATP-hydrolyzing subunit KdpB by the formation of a transient KdpB/KdpC/ATP ternary complex. This is Potassium-transporting ATPase KdpC subunit from Rhodospirillum rubrum (strain ATCC 11170 / ATH 1.1.1 / DSM 467 / LMG 4362 / NCIMB 8255 / S1).